The sequence spans 339 residues: Putative phosphate acyltransferase (339 aa).

Belongs to the PlsX family. As to quaternary structure, homodimer. Probably interacts with PlsY.

It localises to the cytoplasm. It carries out the reaction a fatty acyl-[ACP] + phosphate = an acyl phosphate + holo-[ACP]. The protein operates within lipid metabolism; phospholipid metabolism. Its function is as follows. Catalyzes the reversible formation of acyl-phosphate (acyl-PO(4)) from acyl-[acyl-carrier-protein] (acyl-ACP). This enzyme utilizes acyl-ACP as fatty acyl donor, but not acyl-CoA. In Clostridium perfringens (strain 13 / Type A), this protein is Putative phosphate acyltransferase.